Consider the following 505-residue polypeptide: Kinesin light chain 3 (505 aa).

The tract at residues 1-20 (MSVQVAAPGSTGLGPERLNP) is disordered. The stretch at 90–150 (ALSAHVGVLE…EEEKSHLQFL (61 aa)) forms a coiled coil. The interval 154–197 (RQYDPPEESQRPDSPPRRDSLASLFPSEEEEKKGPEAAGAAAAQ) is disordered. Positions 161–173 (ESQRPDSPPRRDS) are enriched in basic and acidic residues. The residue at position 173 (Ser173) is a Phosphoserine. TPR repeat units follow at residues 207 to 240 (LRTL…LERS), 249 to 282 (ATML…REQT), 291 to 324 (AATL…REKV), 333 to 366 (AKQL…YEAL), and 375 to 408 (AKTK…EALP). Residues 409–439 (APLGAPQGGTAGEAQQQVLRRSSSFSKLRES) are disordered. Residues 421–434 (EAQQQVLRRSSSFS) show a composition bias toward polar residues. Ser467 carries the post-translational modification Phosphoserine. The disordered stretch occupies residues 486 to 505 (QHLNEASRTLSASTQDLSPR). Thr499 is subject to Phosphothreonine. Ser503 carries the phosphoserine modification.

The protein belongs to the kinesin light chain family. In terms of assembly, oligomer composed of two heavy chains and two light chains. Associates with microtubulin in an ATP-dependent manner. Interacts with KIF5C. Interacts with ODF1. Interacts with LRGUK. Interacts with VDAC2. Expressed in postmeiotic male germ cells (at protein level).

The protein localises to the cytoplasm. It is found in the cytoskeleton. The protein resides in the mitochondrion. Kinesin is a microtubule-associated force-producing protein that may play a role in organelle transport. Plays a role during spermiogenesis in the development of the sperm tail midpiece and in the normal function of spermatozoa. May play a role in the formation of the mitochondrial sheath formation in the developing spermatid midpiece. The chain is Kinesin light chain 3 (Klc3) from Rattus norvegicus (Rat).